The primary structure comprises 198 residues: Nucleoid occlusion factor SlmA (198 aa).

One can recognise an HTH tetR-type domain in the interval 10–70; the sequence is NRREEILQSL…SLIEFIEDSL (61 aa). A DNA-binding region (H-T-H motif) is located at residues 33 to 52; the sequence is TTAKLAASVGVSEAALYRHF. Positions 117 to 144 form a coiled coil; it reads EQDRLQGRINQLFERIEAQLRQVLREKR.

Belongs to the nucleoid occlusion factor SlmA family. Homodimer. Interacts with FtsZ.

It localises to the cytoplasm. The protein localises to the nucleoid. Its function is as follows. Required for nucleoid occlusion (NO) phenomenon, which prevents Z-ring formation and cell division over the nucleoid. Acts as a DNA-associated cell division inhibitor that binds simultaneously chromosomal DNA and FtsZ, and disrupts the assembly of FtsZ polymers. SlmA-DNA-binding sequences (SBS) are dispersed on non-Ter regions of the chromosome, preventing FtsZ polymerization at these regions. This is Nucleoid occlusion factor SlmA from Escherichia coli O127:H6 (strain E2348/69 / EPEC).